The sequence spans 425 residues: Enolase 2 (425 aa).

Gln-163 serves as a coordination point for (2R)-2-phosphoglycerate. The active-site Proton donor is the Glu-205. Positions 242, 285, and 312 each coordinate Mg(2+). (2R)-2-phosphoglycerate is bound by residues Lys-337, Arg-366, Ser-367, and Lys-388. Lys-337 functions as the Proton acceptor in the catalytic mechanism.

It belongs to the enolase family. Requires Mg(2+) as cofactor.

It is found in the cytoplasm. Its subcellular location is the secreted. It localises to the cell surface. The enzyme catalyses (2R)-2-phosphoglycerate = phosphoenolpyruvate + H2O. It participates in carbohydrate degradation; glycolysis; pyruvate from D-glyceraldehyde 3-phosphate: step 4/5. In terms of biological role, catalyzes the reversible conversion of 2-phosphoglycerate (2-PG) into phosphoenolpyruvate (PEP). It is essential for the degradation of carbohydrates via glycolysis. The chain is Enolase 2 from Cupriavidus metallidurans (strain ATCC 43123 / DSM 2839 / NBRC 102507 / CH34) (Ralstonia metallidurans).